Here is a 268-residue protein sequence, read N- to C-terminus: 4-diphosphocytidyl-2-C-methyl-D-erythritol kinase (268 aa).

Lysine 10 is a catalytic residue. Residue 101–111 (PTQAGLGGGST) participates in ATP binding. Aspartate 143 is an active-site residue.

The protein belongs to the GHMP kinase family. IspE subfamily.

It carries out the reaction 4-CDP-2-C-methyl-D-erythritol + ATP = 4-CDP-2-C-methyl-D-erythritol 2-phosphate + ADP + H(+). The protein operates within isoprenoid biosynthesis; isopentenyl diphosphate biosynthesis via DXP pathway; isopentenyl diphosphate from 1-deoxy-D-xylulose 5-phosphate: step 3/6. Functionally, catalyzes the phosphorylation of the position 2 hydroxy group of 4-diphosphocytidyl-2C-methyl-D-erythritol. This chain is 4-diphosphocytidyl-2-C-methyl-D-erythritol kinase, found in Helicobacter acinonychis (strain Sheeba).